We begin with the raw amino-acid sequence, 302 residues long: Oxygen-dependent coproporphyrinogen-III oxidase (302 aa).

Substrate is bound at residue Ser94. 2 residues coordinate a divalent metal cation: His98 and His108. Residue His108 is the Proton donor of the active site. 110-112 (NVR) serves as a coordination point for substrate. His147 and His177 together coordinate a divalent metal cation. Residues 242–277 (YVEFNLVYDRGTLFGLQTGGRTESILMSMPPLVRWQ) form an important for dimerization region. Substrate is bound at residue 260–262 (GGR).

The protein belongs to the aerobic coproporphyrinogen-III oxidase family. As to quaternary structure, homodimer. A divalent metal cation is required as a cofactor.

It is found in the cytoplasm. It catalyses the reaction coproporphyrinogen III + O2 + 2 H(+) = protoporphyrinogen IX + 2 CO2 + 2 H2O. It participates in porphyrin-containing compound metabolism; protoporphyrin-IX biosynthesis; protoporphyrinogen-IX from coproporphyrinogen-III (O2 route): step 1/1. Functionally, involved in the heme biosynthesis. Catalyzes the aerobic oxidative decarboxylation of propionate groups of rings A and B of coproporphyrinogen-III to yield the vinyl groups in protoporphyrinogen-IX. The polypeptide is Oxygen-dependent coproporphyrinogen-III oxidase (Shewanella sp. (strain ANA-3)).